The chain runs to 278 residues: NADPH-dependent 7-cyano-7-deazaguanine reductase (278 aa).

A substrate-binding site is contributed by 87–89; sequence IES. NADPH is bound at residue 89 to 90; sequence SK. The active-site Thioimide intermediate is the Cys185. Asp192 functions as the Proton donor in the catalytic mechanism. 224-225 serves as a coordination point for substrate; the sequence is HE. Residue 253–254 participates in NADPH binding; it reads RG. The segment at 255 to 278 is disordered; that stretch reads GLDINPYRSTNPTFSVQNHRSFRQ. The segment covering 261-278 has biased composition (polar residues); it reads YRSTNPTFSVQNHRSFRQ.

The protein belongs to the GTP cyclohydrolase I family. QueF type 2 subfamily. As to quaternary structure, homodimer.

It is found in the cytoplasm. The catalysed reaction is 7-aminomethyl-7-carbaguanine + 2 NADP(+) = 7-cyano-7-deazaguanine + 2 NADPH + 3 H(+). It participates in tRNA modification; tRNA-queuosine biosynthesis. Its function is as follows. Catalyzes the NADPH-dependent reduction of 7-cyano-7-deazaguanine (preQ0) to 7-aminomethyl-7-deazaguanine (preQ1). The sequence is that of NADPH-dependent 7-cyano-7-deazaguanine reductase from Coxiella burnetii (strain Dugway 5J108-111).